The following is a 73-amino-acid chain: Putative defensin-like protein 270 (73 aa).

The first 23 residues, 1–23 (MMSSKSHFVALLLIIFLIVNVQS), serve as a signal peptide directing secretion. 4 disulfide bridges follow: Cys33–Cys72, Cys39–Cys60, Cys45–Cys70, and Cys49–Cys71.

Belongs to the DEFL family.

Its subcellular location is the secreted. The chain is Putative defensin-like protein 270 from Arabidopsis thaliana (Mouse-ear cress).